Consider the following 270-residue polypeptide: Extracellular metalloprotease MCYG_04966 (270 aa).

Positions 1–19 (MRLSLFLSGLAAAGSIVSA) are cleaved as a signal peptide. A glycan (N-linked (GlcNAc...) asparagine) is linked at Asn-135. His-184 contacts Zn(2+). Glu-185 is an active-site residue. His-188 provides a ligand contact to Zn(2+). N-linked (GlcNAc...) asparagine glycosylation occurs at Asn-199. A disordered region spans residues 208–227 (VADTPPQSKKTSGCPNSQDS). Residues 212 to 227 (PPQSKKTSGCPNSQDS) show a composition bias toward polar residues. Cys-221 and Cys-247 are oxidised to a cystine.

Belongs to the peptidase M43B family.

The protein resides in the secreted. Secreted metalloproteinase that allows assimilation of proteinaceous substrates. Plays a pivotal role as a pathogenicity determinant during infections and contributes to the ability of the pathogen to persist within the mammalian host. In Arthroderma otae (strain ATCC MYA-4605 / CBS 113480) (Microsporum canis), this protein is Extracellular metalloprotease MCYG_04966.